Consider the following 93-residue polypeptide: Bacterial microcompartment shell protein PduA (93 aa).

The BMC domain occupies 5 to 89 (ALGMVETKGL…PHTDVEKILP (85 aa)).

The protein belongs to the bacterial microcompartments protein family. Homohexamer with a central pore; Lys-26 and Arg-79 interactions are very important for hexamer symmetry. The hexamers pack against each other in arrays. Interacts individually with shell proteins PduB, PduB', PduJ, PduK, PduN and PduU. Modeling suggests PduC, PduD, PduE, PduL and PduP interact with a cleft formed by the C-terminal segments of 2 adjacent PduA subunits (on the BMC luminal side) in the hexamer.

It localises to the bacterial microcompartment. It functions in the pathway polyol metabolism; 1,2-propanediol degradation. One of the major shell proteins of the bacterial microcompartment (BMC) dedicated to 1,2-propanediol (1,2-PD) degradation, probably important for metabolite diffusion into and out of the BMC. Overexpression of a C-terminally mutated form (PduA*) makes thin parallel filaments with a honeycomb-like assembly in cross-section that probably form nanotubes. The filaments interfere with septation. PduA is probably the hub for binding multiple enzymes to the interior of the BMC. At least one of PduA or PduJ is required for BMC assembly; it must be encoded as the first gene in the pdu operon. Functionally, expression of a cosmid containing the full 21-gene pdu operon in E.coli allows E.coli to grow on 1,2-PD with the appearance of BMCs in its cytoplasm. Overexpression of this protein leads to aberrant intracellular filaments. Its function is as follows. The 1,2-PD-specific bacterial microcompartment (BMC) concentrates low levels of 1,2-PD catabolic enzymes, concentrates volatile reaction intermediates thus enhancing pathway flux and keeps the level of toxic, mutagenic propionaldehyde low. The sequence is that of Bacterial microcompartment shell protein PduA from Citrobacter freundii.